The primary structure comprises 151 residues: Deoxyuridine 5'-triphosphate nucleotidohydrolase (151 aa).

Substrate is bound by residues 70–72 (RSG), N83, 87–89 (LID), and M97.

This sequence belongs to the dUTPase family. It depends on Mg(2+) as a cofactor.

The enzyme catalyses dUTP + H2O = dUMP + diphosphate + H(+). The protein operates within pyrimidine metabolism; dUMP biosynthesis; dUMP from dCTP (dUTP route): step 2/2. This enzyme is involved in nucleotide metabolism: it produces dUMP, the immediate precursor of thymidine nucleotides and it decreases the intracellular concentration of dUTP so that uracil cannot be incorporated into DNA. The polypeptide is Deoxyuridine 5'-triphosphate nucleotidohydrolase (Yersinia pseudotuberculosis serotype O:1b (strain IP 31758)).